The sequence spans 540 residues: Cytochrome P450 monooxygenase ORF5 (540 aa).

The helical transmembrane segment at tyrosine 48 to alanine 68 threads the bilayer. Residues asparagine 376 and asparagine 460 are each glycosylated (N-linked (GlcNAc...) asparagine). Cysteine 483 provides a ligand contact to heme.

This sequence belongs to the cytochrome P450 family. The cofactor is heme.

The protein resides in the membrane. It functions in the pathway sesquiterpene biosynthesis. Cytochrome P450 monooxygenase; part of the gene cluster that mediates the biosynthesis of PR-toxin, a bicyclic sesquiterpene belonging to the eremophilane class and acting as a mycotoxin. The first step of the pathway is catalyzed by the aristolochene synthase which performs the cyclization of trans,trans-farnesyl diphosphate (FPP) to the bicyclic sesquiterpene aristolochene. Following the formation of aristolochene, the non-oxygenated aristolochene is converted to the trioxygenated intermediate eremofortin B, via 7-epi-neopetasone. This conversion appears to involve three enzymes, a hydroxysterol oxidase-like enzyme, the quinone-oxidase prx3 that forms the quinone-type-structure in the bicyclic nucleus of aristolochene with the C8-oxo group and the C-3 hydroxyl group, and the P450 monooxygenase ORF6 that introduces the epoxide at the double bond between carbons 1 and 2. No monoxy or dioxy-intermediates have been reported to be released to the broth, so these three early oxidative reactions may be coupled together. Eremofortin B is further oxidized by another P450 monooxygenase, that introduces a second epoxide between carbons 7 and 11 prior to acetylation to eremofortin A by the acetyltransferase ORF8. The second epoxidation may be performed by a second P450 monooxygenase. After the acetylation step, eremofortin A is converted to eremofortin C and then to PR-toxin. First the conversion of eremofortin A to eremofortin C proceeds by oxidation of the side chain of the molecule at C-12 and is catalyzed by the short-chain oxidoreductase prx1. The cytochrome P450 monooxygenase ORF6 is probably also involved in this step. The primary alcohol formed at C-12 is finally oxidized by the short-chain alcohol dehydrogenase prx4 that forms PR-toxin. The sequence is that of Cytochrome P450 monooxygenase ORF5 from Penicillium roqueforti (strain FM164).